The chain runs to 298 residues: MANSWWEIQVLCDPNLEESVFWRLDKFGCSGTATEIKGQSSVIKAYIPQITTQLLDLAALSLWLIQDALLVNLPRPITRWRLIDEEDWASSWKQHWQPTEIGDRMIIYPAWLTPPTDTDQIIIRLDPGSAFGTGTHATTQLCLESLEMRLTMDAEPVTLADIGCGSGILSIGAILLGAQKVYAVDTDPLAVSATRSNRHLNEIDPNHLIVNQGSIEQLLDLIPGQVDGIVCNILAEVIMDMIPQFTALTKPKSWAILSGILLEQAKPIADTLEQHDWVVAALWKRGDWCCFNIRKNSD.

4 residues coordinate S-adenosyl-L-methionine: T139, G163, D185, and N232.

The protein belongs to the methyltransferase superfamily. PrmA family.

The protein localises to the cytoplasm. It carries out the reaction L-lysyl-[protein] + 3 S-adenosyl-L-methionine = N(6),N(6),N(6)-trimethyl-L-lysyl-[protein] + 3 S-adenosyl-L-homocysteine + 3 H(+). In terms of biological role, methylates ribosomal protein L11. This chain is Ribosomal protein L11 methyltransferase, found in Gloeothece citriformis (strain PCC 7424) (Cyanothece sp. (strain PCC 7424)).